Here is a 1321-residue protein sequence, read N- to C-terminus: Indole-3-acetaldehyde oxidase (1321 aa).

In terms of domain architecture, 2Fe-2S ferredoxin-type spans 1 to 90 (MSLVFAINGQ…HCNITTSEGL (90 aa)). The [2Fe-2S] cluster site is built by Cys42, Cys47, and Cys50. Residues 215–404 (VDSGMYRWCS…LSIEIPFWHS (190 aa)) enclose the FAD-binding PCMH-type domain.

This sequence belongs to the xanthine dehydrogenase family. Aldehyde oxidases (AO) are homodimers and heterodimers of AO subunits. AO-beta is a AAO1-AAO2 heterodimer; AO-gamma is a AAO2 homodimer. AAO2 also forms a dimer with AAO3. [2Fe-2S] cluster serves as cofactor. FAD is required as a cofactor. It depends on Mo-molybdopterin as a cofactor. Weakly expressed in roots, leaves and seedlings. In seedlings, mostly expressed in lower part of hypocotyls. Detectable in seeds and mature siliques at low levels.

The protein localises to the cytoplasm. The catalysed reaction is indole-3-acetaldehyde + O2 + H2O = (indol-3-yl)acetate + H2O2 + H(+). Strongly inhibited by iodoacetate, potassium cyanide (KCN), 2-mercaptoethanol, dithiothreitol (DTT), p-chloromercuribenzoate, menadione and estradiol. Weakly inhibited by 4'-(9-acridinylamino)methanesulfon-m-anisidine (mAMSA) and tritonX-100. Not affected by allopurinol. Its function is as follows. In higher plant aldehyde oxidases (AO) appear to be homo- and heterodimeric assemblies of AO subunits with probably different physiological functions. In vitro, AO-gamma uses heptaldehyde, benzaldehyde, naphthaldehyde and cinnamaldehyde as substrates; AO-beta uses indole-3-acetaldehyde (IAAld), indole-3-aldehyde (IAld) and naphtaldehyde; the AAO2-AAO3 dimer uses abscisic aldehyde. The chain is Indole-3-acetaldehyde oxidase (AAO2) from Arabidopsis thaliana (Mouse-ear cress).